The sequence spans 453 residues: GTPase Der (453 aa).

EngA-type G domains lie at 4–169 (PIVA…PPTT) and 177–352 (IKIA…EEHK). Residues 10–17 (GRPNVGKS), 57–61 (DTGGL), 120–123 (NKCE), 183–190 (GRPNVGKS), 230–234 (DTAGI), and 295–298 (NKWD) contribute to the GTP site. A KH-like domain is found at 353-438 (RRVSTSVINE…PIRLLWRSKK (86 aa)).

It belongs to the TRAFAC class TrmE-Era-EngA-EngB-Septin-like GTPase superfamily. EngA (Der) GTPase family. As to quaternary structure, associates with the 50S ribosomal subunit.

In terms of biological role, GTPase that plays an essential role in the late steps of ribosome biogenesis. This is GTPase Der from Trichormus variabilis (strain ATCC 29413 / PCC 7937) (Anabaena variabilis).